The following is a 368-amino-acid chain: Probable pectate lyase 4 (368 aa).

The signal sequence occupies residues 1 to 25; it reads MASLVVIVSLLLAAFASPLLETAHS. Residue Asn27 is glycosylated (N-linked (GlcNAc...) asparagine). Ca(2+) contacts are provided by Asp167, Asp191, and Asp195. Arg247 is an active-site residue.

It belongs to the polysaccharide lyase 1 family. The cofactor is Ca(2+).

It carries out the reaction Eliminative cleavage of (1-&gt;4)-alpha-D-galacturonan to give oligosaccharides with 4-deoxy-alpha-D-galact-4-enuronosyl groups at their non-reducing ends.. It functions in the pathway glycan metabolism; pectin degradation; 2-dehydro-3-deoxy-D-gluconate from pectin: step 2/5. The protein is Probable pectate lyase 4 of Arabidopsis thaliana (Mouse-ear cress).